We begin with the raw amino-acid sequence, 512 residues long: Envelope glycoprotein (512 aa).

The signal sequence occupies residues 1–15; sequence MFLQTALLLLSLGVA. Asn185, Asn263, Asn289, Asn378, and Asn416 each carry an N-linked (GlcNAc...) asparagine; by host glycan. The helical transmembrane segment at 479–502 threads the bilayer; the sequence is GQLGGLLYGNIGVYLLIAFAFVLL.

Its subcellular location is the virion membrane. Attaches the virus to host cellular receptor and later induces fusion of virion with host membrane. The chain is Envelope glycoprotein from Thogoto virus (isolate SiAr 126) (Tho).